A 466-amino-acid polypeptide reads, in one-letter code: Oryzain beta chain (466 aa).

The N-terminal stretch at 1–21 (MAARAAAAAFLLLLIVGAATA) is a signal peptide. The propeptide at 22–140 (APDMSIISYN…ERYRHDGVEE (119 aa)) is activation peptide. Disulfide bonds link cysteine 162–cysteine 205, cysteine 196–cysteine 238, and cysteine 296–cysteine 347. Cysteine 165 is a catalytic residue. Active-site residues include histidine 302 and asparagine 322. N-linked (GlcNAc...) asparagine glycosylation occurs at asparagine 341. Residues 358–380 (KSGANPPKPSPTPPTPPTPPPPS) are disordered. The propeptide at 362-466 (NPPKPSPTPP…KRTLAKLNTA (105 aa)) is removed in mature form. Pro residues predominate over residues 363–380 (PPKPSPTPPTPPTPPPPS). Disulfide bonds link cysteine 386-cysteine 398 and cysteine 392-cysteine 413. Residue asparagine 389 is glycosylated (N-linked (GlcNAc...) asparagine).

Belongs to the peptidase C1 family. In terms of tissue distribution, expressed only in seeds.

Probable thiol protease. This chain is Oryzain beta chain, found in Oryza sativa subsp. japonica (Rice).